The primary structure comprises 437 residues: Homogentisate 1,2-dioxygenase (437 aa).

A disordered region spans residues 15–34 (NEHATSDPRVPDALPVGQNS). Fe cation is bound by residues histidine 336, glutamate 342, and histidine 372.

The protein belongs to the homogentisate dioxygenase family. Fe cation serves as cofactor. As to expression, expressed in the hypodermis and intestine.

It catalyses the reaction homogentisate + O2 = 4-maleylacetoacetate + H(+). It participates in amino-acid degradation; L-phenylalanine degradation; acetoacetate and fumarate from L-phenylalanine: step 4/6. Its function is as follows. Plays a role in the tyrosine degradation pathway. The sequence is that of Homogentisate 1,2-dioxygenase from Caenorhabditis elegans.